Reading from the N-terminus, the 296-residue chain is Enoyl-CoA hydratase ACTT3 (296 aa).

The Peroxisomal targeting signal type 1 signature appears at 294 to 296; it reads PKL.

This sequence belongs to the enoyl-CoA hydratase/isomerase family.

It localises to the peroxisome. It catalyses the reaction a (3S)-3-hydroxyacyl-CoA = a (2E)-enoyl-CoA + H2O. The catalysed reaction is a 4-saturated-(3S)-3-hydroxyacyl-CoA = a (3E)-enoyl-CoA + H2O. It participates in mycotoxin biosynthesis. Functionally, enoyl-CoA hydratase; part of the gene clusters that mediate the biosynthesis of the host-selective toxins (HSTs) ACT-toxins responsible for brown spot of tangerine disease by the tangerine pathotype which affects tangerines and mandarins. ACT-toxins consist of three moieties, 9,10-epoxy-8-hydroxy-9-methyl-decatrienoic acid (EDA), valine and a polyketide. ACT-toxin I is toxic to both citrus and pear; toxin II the 5''-deoxy derivative of ACT-toxin I, is highly toxic to pear and slightly toxic to citrus. On cellular level, ACT-toxins affect plasma membrane of susceptible cells and cause a sudden increase in loss of K(+) after a few minutes of toxin treatment. The acyl-CoA ligase ACTT1, the hydrolase ACTT2, the enoyl-CoA hydratases ACTT3 and ACTT6, and the acyl-CoA synthetase ACTT5 are all involved in the biosynthesis of the AK-, AF- and ACT-toxin common 9,10-epoxy-8-hydroxy-9-methyl-decatrienoic acid (EDA) structural moiety. The exact role of each enzyme, and of additional enzymes identified within the AF-toxin clusters have still to be determined. On the other hand, ACTTS1 to ACTTS4 are specific to the tangerine pathotype. The function of ACTTS3 is to elongate the polyketide chain portion of ACT-toxin that is unique to this toxin. The enoyl-reductase ACTTS2 might complement the missing enoyl-reductase (ER) domain in ACTTS3 in the synthesis of the polyketide portion of ACT-toxin. The roles of the nonribosomal peptide synthetases-related proteins ACTTS1 and ACTTS4 have also still not been elucidated. In Alternaria alternata (Alternaria rot fungus), this protein is Enoyl-CoA hydratase ACTT3.